The following is a 394-amino-acid chain: Guanine nucleotide-binding protein G(s) subunit alpha (394 aa).

The tract at residues 1 to 23 is disordered; the sequence is MGCLGNSKTEDQRNEEKAQREAN. Residue Gly-2 is the site of N-palmitoyl glycine attachment. A lipid anchor (S-palmitoyl cysteine) is attached at Cys-3. The span at 8 to 23 shows a compositional bias: basic and acidic residues; it reads KTEDQRNEEKAQREAN. In terms of domain architecture, G-alpha spans 39 to 394; the sequence is ATHRLLLLGA…RMHLRQYELL (356 aa). The interval 42-55 is G1 motif; sequence RLLLLGAGESGKST. 47-55 lines the GTP pocket; it reads GAGESGKST. Ser-54 provides a ligand contact to Mg(2+). The interval 68 to 91 is disordered; the sequence is FNGEGGEEDPQAARSNSDGEKATK. A G2 motif region spans residues 196-204; it reads DLLRCRVLT. GTP is bound by residues 197–204, 223–227, 292–295, and Ala-366; these read LLRCRVLT, DVGGQ, and NKQD. Residue Thr-204 coordinates Mg(2+). Residues 219–228 form a G3 motif region; the sequence is FHMFDVGGQR. The G4 motif stretch occupies residues 288 to 295; that stretch reads ILFLNKQD. Residues 364 to 369 form a G5 motif region; the sequence is TCAVDT.

Belongs to the G-alpha family. G(s) subfamily. As to quaternary structure, heterotrimeric G proteins are composed of 3 units; alpha, beta and gamma. The alpha chain contains the guanine nucleotide binding site. Interacts with CRY1; the interaction may block GPCR-mediated regulation of cAMP concentrations. Interacts with ADCY6 and stimulates its adenylyl cyclase activity. Interacts with ADCY2 and ADCY5. Stimulates the ADCY5 adenylyl cyclase activity. Interaction with SASH1.

Its subcellular location is the cell membrane. Functionally, guanine nucleotide-binding proteins (G proteins) function as transducers in numerous signaling pathways controlled by G protein-coupled receptors (GPCRs). Signaling involves the activation of adenylyl cyclases, resulting in increased levels of the signaling molecule cAMP. GNAS functions downstream of several GPCRs, including beta-adrenergic receptors. Stimulates the Ras signaling pathway via RAPGEF2. This is Guanine nucleotide-binding protein G(s) subunit alpha (GNAS) from Canis lupus familiaris (Dog).